The chain runs to 424 residues: Serine hydroxymethyltransferase 2 (424 aa).

Residues Leu125 and 129 to 131 (GHL) each bind (6S)-5,6,7,8-tetrahydrofolate. Lys234 is subject to N6-(pyridoxal phosphate)lysine. (6S)-5,6,7,8-tetrahydrofolate is bound at residue Glu250.

Belongs to the SHMT family. In terms of assembly, homodimer. Requires pyridoxal 5'-phosphate as cofactor.

It localises to the cytoplasm. It carries out the reaction (6R)-5,10-methylene-5,6,7,8-tetrahydrofolate + glycine + H2O = (6S)-5,6,7,8-tetrahydrofolate + L-serine. The protein operates within one-carbon metabolism; tetrahydrofolate interconversion. It functions in the pathway amino-acid biosynthesis; glycine biosynthesis; glycine from L-serine: step 1/1. In terms of biological role, catalyzes the reversible interconversion of serine and glycine with tetrahydrofolate (THF) serving as the one-carbon carrier. This reaction serves as the major source of one-carbon groups required for the biosynthesis of purines, thymidylate, methionine, and other important biomolecules. Also exhibits THF-independent aldolase activity toward beta-hydroxyamino acids, producing glycine and aldehydes, via a retro-aldol mechanism. This Ralstonia nicotianae (strain ATCC BAA-1114 / GMI1000) (Ralstonia solanacearum) protein is Serine hydroxymethyltransferase 2.